Consider the following 661-residue polypeptide: Transmembrane and coiled-coil domain-containing protein STS1 (661 aa).

2 disordered regions span residues 34–71 (AHHH…GADA) and 154–185 (VGNT…DDQL). The segment covering 59–69 (SSSSSNSGAGA) has biased composition (low complexity). The span at 175–184 (SPGESSHDDQ) shows a compositional bias: basic and acidic residues. 4 helical membrane passes run 306–326 (ALLA…FGAL), 333–353 (LVPV…GSVA), 355–375 (SVAV…SKMA), and 466–486 (LSGL…TDFI).

The protein belongs to the TMCO4 family. As to quaternary structure, interacts with PKS10/PKS2 and 4CLL9/ACOS12.

The protein localises to the endoplasmic reticulum membrane. Involved in anther lipids biosynthesis and is required for tapetum degradation and pollen wall formation. Required for the formation of Ubisch bodies and microspores. Possesses lipase activity in vitro toward two synthetic substrates, p-nitrophenyl acetate (pNPA) and p-nitrophenyl butyrate (pNPB). The polypeptide is Transmembrane and coiled-coil domain-containing protein STS1 (Oryza sativa subsp. japonica (Rice)).